The sequence spans 964 residues: Glycine dehydrogenase (decarboxylating) (964 aa).

Polar residues predominate over residues methionine 1–arginine 10. Residues methionine 1–proline 25 are disordered. Lysine 713 is subject to N6-(pyridoxal phosphate)lysine.

The protein belongs to the GcvP family. As to quaternary structure, the glycine cleavage system is composed of four proteins: P, T, L and H. Requires pyridoxal 5'-phosphate as cofactor.

It catalyses the reaction N(6)-[(R)-lipoyl]-L-lysyl-[glycine-cleavage complex H protein] + glycine + H(+) = N(6)-[(R)-S(8)-aminomethyldihydrolipoyl]-L-lysyl-[glycine-cleavage complex H protein] + CO2. The glycine cleavage system catalyzes the degradation of glycine. The P protein binds the alpha-amino group of glycine through its pyridoxal phosphate cofactor; CO(2) is released and the remaining methylamine moiety is then transferred to the lipoamide cofactor of the H protein. The polypeptide is Glycine dehydrogenase (decarboxylating) (Leptospira borgpetersenii serovar Hardjo-bovis (strain JB197)).